Consider the following 351-residue polypeptide: Mediator of RNA polymerase II transcription subunit 18 (351 aa).

The tract at residues 153 to 231 (GNGDPIDIDT…LPQSLSNGVS (79 aa)) is disordered. Over residues 163-204 (NNDKQGDNNTDKPKQEHDGKLPEAIDEDIIKNGDEKKTTHDD) the composition is skewed to basic and acidic residues. Over residues 205–216 (NDSDIMEIDEPN) the composition is skewed to acidic residues. The segment covering 217 to 231 (PETQTLPQSLSNGVS) has biased composition (polar residues).

Belongs to the Mediator complex subunit 18 family. In terms of assembly, component of the Mediator complex.

Its subcellular location is the nucleus. Functionally, component of the Mediator complex, a coactivator involved in the regulated transcription of nearly all RNA polymerase II-dependent genes. Mediator functions as a bridge to convey information from gene-specific regulatory proteins to the basal RNA polymerase II transcription machinery. Mediator is recruited to promoters by direct interactions with regulatory proteins and serves as a scaffold for the assembly of a functional preinitiation complex with RNA polymerase II and the general transcription factors. The protein is Mediator of RNA polymerase II transcription subunit 18 (SRB5) of Candida albicans (strain SC5314 / ATCC MYA-2876) (Yeast).